We begin with the raw amino-acid sequence, 323 residues long: Acetyl esterase (323 aa).

Residues 91–93 (HGG) carry the Involved in the stabilization of the negatively charged intermediate by the formation of the oxyanion hole motif. Residues Ser-165, Asp-262, and His-292 contribute to the active site.

This sequence belongs to the 'GDXG' lipolytic enzyme family. As to quaternary structure, homodimer. Interacts with MalT and MelA.

It is found in the cytoplasm. In terms of biological role, displays esterase activity towards short chain fatty esters (acyl chain length of up to 8 carbons). Able to hydrolyze triacetylglycerol (triacetin) and tributyrylglycerol (tributyrin), but not trioleylglycerol (triolein) or cholesterol oleate. Negatively regulates MalT activity by antagonizing maltotriose binding. Inhibits MelA galactosidase activity. The chain is Acetyl esterase from Salmonella dublin (strain CT_02021853).